The sequence spans 209 residues: MIGLIGRKVGMTRVFTEDGVSIPVTVVEVEANRVSQVKTLETDGYAAIQVTAGSKKANRVNKAEAGHFAKAGVEAGRGLWEFRLENGEEFAVGAELTVELFNETKKVDVTGTSKGKGFQGAVKRWNFRTQDMTHGNSLSHRAPGSIGQCQTPGRVFKGKKMAGHMGAERVTTQNLEIVRVDAERNLLLIKGAVPGSTGGNVIVKPAVKA.

Residue glutamine 150 is modified to N5-methylglutamine.

It belongs to the universal ribosomal protein uL3 family. As to quaternary structure, part of the 50S ribosomal subunit. Forms a cluster with proteins L14 and L19. Post-translationally, methylated by PrmB.

One of the primary rRNA binding proteins, it binds directly near the 3'-end of the 23S rRNA, where it nucleates assembly of the 50S subunit. The protein is Large ribosomal subunit protein uL3 of Vibrio campbellii (strain ATCC BAA-1116).